We begin with the raw amino-acid sequence, 428 residues long: GTPase HflX (428 aa).

A Hflx-type G domain is found at 214 to 374 (PVVAIVGYTN…AIERELFKET (161 aa)). Residues 220 to 227 (GYTNAGKS), 245 to 249 (FATLD), 267 to 270 (DTVG), 333 to 336 (NKID), and 352 to 354 (SAK) contribute to the GTP site. Mg(2+) is bound by residues Ser-227 and Thr-247.

Belongs to the TRAFAC class OBG-HflX-like GTPase superfamily. HflX GTPase family. As to quaternary structure, monomer. Associates with the 50S ribosomal subunit. Mg(2+) serves as cofactor.

It is found in the cytoplasm. In terms of biological role, GTPase that associates with the 50S ribosomal subunit and may have a role during protein synthesis or ribosome biogenesis. The chain is GTPase HflX from Caldanaerobacter subterraneus subsp. tengcongensis (strain DSM 15242 / JCM 11007 / NBRC 100824 / MB4) (Thermoanaerobacter tengcongensis).